The sequence spans 85 residues: Large ribosomal subunit protein bL27 (85 aa).

The disordered stretch occupies residues 1 to 21; sequence MAHKKGGGSTKNGRDSNPKYL.

Belongs to the bacterial ribosomal protein bL27 family.

The polypeptide is Large ribosomal subunit protein bL27 (Chlorobium chlorochromatii (strain CaD3)).